Consider the following 88-residue polypeptide: Co-chaperonin GroES (88 aa).

It belongs to the GroES chaperonin family. In terms of assembly, heptamer of 7 subunits arranged in a ring. Interacts with the chaperonin GroEL.

The protein resides in the cytoplasm. Functionally, together with the chaperonin GroEL, plays an essential role in assisting protein folding. The GroEL-GroES system forms a nano-cage that allows encapsulation of the non-native substrate proteins and provides a physical environment optimized to promote and accelerate protein folding. GroES binds to the apical surface of the GroEL ring, thereby capping the opening of the GroEL channel. This is Co-chaperonin GroES from Thermodesulfovibrio yellowstonii (strain ATCC 51303 / DSM 11347 / YP87).